We begin with the raw amino-acid sequence, 169 residues long: Calfumirin-1 (169 aa).

EF-hand domains lie at 6-41 (NIVEEVQKMLDTYDTNKDGEITKAEAVEYFKGKKAF), 42-77 (NPERSAIYLFQVYDKDNDGKITIKELAGDIDFDKAL), 93-128 (EVEEDIEAFILRHNKDDNTDITKDELIQGFKETGAK), and 129-164 (DPEKSANFILTEMDTNKDGTITVKELRVYYQKVQKL). Ca(2+)-binding residues include aspartate 19, asparagine 21, aspartate 23, glutamate 25, glutamate 30, aspartate 55, aspartate 57, aspartate 59, lysine 61, glutamate 66, aspartate 108, asparagine 110, aspartate 112, glutamate 117, aspartate 142, asparagine 144, aspartate 146, threonine 148, and glutamate 153.

May be involved in the phase-shift of cells from growth to differentiation. The sequence is that of Calfumirin-1 (cafA) from Dictyostelium discoideum (Social amoeba).